A 154-amino-acid chain; its full sequence is Myoglobin (154 aa).

Positions Gly2–Lys148 constitute a Globin domain. Ser4 bears the Phosphoserine mark. His65 is a binding site for nitrite. O2 is bound at residue His65. Phosphothreonine is present on Thr68. Heme b is bound at residue His94.

It belongs to the globin family. In terms of assembly, monomeric.

The protein localises to the cytoplasm. It localises to the sarcoplasm. It catalyses the reaction Fe(III)-heme b-[protein] + nitric oxide + H2O = Fe(II)-heme b-[protein] + nitrite + 2 H(+). The catalysed reaction is H2O2 + AH2 = A + 2 H2O. Monomeric heme protein which primary function is to store oxygen and facilitate its diffusion within muscle tissues. Reversibly binds oxygen through a pentacoordinated heme iron and enables its timely and efficient release as needed during periods of heightened demand. Depending on the oxidative conditions of tissues and cells, and in addition to its ability to bind oxygen, it also has a nitrite reductase activity whereby it regulates the production of bioactive nitric oxide. Under stress conditions, like hypoxia and anoxia, it also protects cells against reactive oxygen species thanks to its pseudoperoxidase activity. This is Myoglobin (MB) from Cervus elaphus (Red deer).